Here is a 1967-residue protein sequence, read N- to C-terminus: RQC trigger complex helicase SLH1 (1967 aa).

The 189-residue stretch at 297–485 (PVAYKTNENM…FLGVNRQIGM (189 aa)) folds into the Helicase ATP-binding 1 domain. Position 310–317 (310–317 (APTGAGKT)) interacts with ATP. A DEVH box motif is present at residues 427–430 (DEVH). In terms of domain architecture, Helicase C-terminal 1 spans 516–735 (NIDKVAYDKL…NVDEAIEWLG (220 aa)). Residues 795 to 1100 (AKDLGRVSSD…GCESTHAISF (306 aa)) form the SEC63 1 domain. The region spanning 1149–1324 (YTLYNTNENA…WLGVKDHGLY (176 aa)) is the Helicase ATP-binding 2 domain. 1162–1169 (SPTGSGKT) provides a ligand contact to ATP. The DEAH box signature appears at 1266 to 1269 (DEIH). Residues 1355–1550 (MNKPVFMAIK…SLHKVLDDHL (196 aa)) form the Helicase C-terminal 2 domain. In terms of domain architecture, SEC63 2 spans 1626-1776 (ATPFLSISSY…MMQCIKQGYW (151 aa)).

Belongs to the helicase family. SKI2 subfamily. Component of the RQT (ribosome quality control trigger) complex, composed of SLH1, CUE3, and RQT4. Interacts with CUE3. Interacts with RQT4. Interacts with HEL2. Associates with translating ribosomes.

Its subcellular location is the cytoplasm. It localises to the cytosol. The enzyme catalyses ATP + H2O = ADP + phosphate + H(+). Functionally, involved in activation of the ribosome quality control (RQC) pathway, a pathway that degrades nascent peptide chains during problematic translation. Drives the splitting of stalled ribosomes that are polyubiquitinated in a HEL2-dependent manner, as part of the ribosome quality control trigger (RQT) complex. Also represses the translation of non-poly(A) mRNAs together with SKI2. May block translation by inhibiting translation initiation factor 5B (FUN12) action on mRNAs lacking a 3' poly(A) structure. Involved in antiviral defense, preventing L-A dsRNA virus propagation by specifically blocking translation of viral mRNAs. The protein is RQC trigger complex helicase SLH1 of Saccharomyces cerevisiae (strain ATCC 204508 / S288c) (Baker's yeast).